Consider the following 537-residue polypeptide: Probable protein kinase UbiB (537 aa).

Residues 24 to 44 traverse the membrane as a helical segment; the sequence is LLFEQPLLPWWLASLRLLMPW. One can recognise a Protein kinase domain in the interval 126–494; that stretch reads RFDVEPLASA…RRRQGDNWAL (369 aa). Residues 132 to 140 and Lys-154 each bind ATP; that span reads LASASVAQV. Asp-289 functions as the Proton acceptor in the catalytic mechanism. Helical transmembrane passes span 493 to 513 and 515 to 535; these read ALRL…AGAV and LSAP…YLIV.

It belongs to the ABC1 family. UbiB subfamily.

It localises to the cell inner membrane. It functions in the pathway cofactor biosynthesis; ubiquinone biosynthesis [regulation]. Is probably a protein kinase regulator of UbiI activity which is involved in aerobic coenzyme Q (ubiquinone) biosynthesis. In Pseudomonas entomophila (strain L48), this protein is Probable protein kinase UbiB.